A 355-amino-acid chain; its full sequence is Probable nitronate monooxygenase (355 aa).

Residues Asn71, Gln175, Gly180, Gly218, and 237 to 240 (QMGT) contribute to the FMN site.

Belongs to the nitronate monooxygenase family. NMO class I subfamily. The cofactor is FMN.

The enzyme catalyses 3 propionate 3-nitronate + 3 O2 + H2O = 3 3-oxopropanoate + 2 nitrate + nitrite + H2O2 + 3 H(+). Its function is as follows. Nitronate monooxygenase that uses molecular oxygen to catalyze the oxidative denitrification of alkyl nitronates. Acts on propionate 3-nitronate (P3N), the presumed physiological substrate. Probably functions in the detoxification of P3N, a metabolic poison produced by plants and fungi as a defense mechanism. This is Probable nitronate monooxygenase from Staphylococcus aureus (strain USA300).